The primary structure comprises 129 residues: Replication initiation control protein YabA (129 aa).

Zn(2+)-binding residues include His103, Cys105, Cys119, and Cys122.

The protein belongs to the YabA family. As to quaternary structure, homotetramer. Interacts with both DnaA and DnaN, acting as a bridge between these two proteins. Zn(2+) serves as cofactor.

It is found in the cytoplasm. The protein localises to the nucleoid. Its function is as follows. Involved in control of chromosome replication initiation. Inhibits the cooperative binding of DnaA to the oriC region, thus negatively regulating initiation of chromosome replication. Inhibits the ability of DnaA-ATP to form a helix on DNA; does not disassemble preformed DnaA-DNA helices. Decreases the residence time of DnaA on the chromosome at its binding sites (oriC, replication forks and promoter-binding sites). Tethers DnaA to the replication machinery via the DNA polymerase beta sliding clamp subunit (dnaN). Associates with oriC and other DnaA targets on the chromosome in a DnaA-dependent manner. In Listeria monocytogenes serotype 4b (strain CLIP80459), this protein is Replication initiation control protein YabA.